Here is a 261-residue protein sequence, read N- to C-terminus: Uridylate kinase (261 aa).

The tract at residues 1–23 is disordered; that stretch reads MTEPDVAGAPASKPEPASTGAAS. An ATP-binding site is contributed by 36–39; sequence KLGG. Glycine 77 provides a ligand contact to UMP. Glycine 78 and arginine 82 together coordinate ATP. Residues aspartate 97 and 158–165 each bind UMP; that span reads MGLPYFST. Residues phenylalanine 191 and aspartate 194 each contribute to the ATP site.

This sequence belongs to the UMP kinase family. As to quaternary structure, homohexamer.

The protein localises to the cytoplasm. It carries out the reaction UMP + ATP = UDP + ADP. Its pathway is pyrimidine metabolism; CTP biosynthesis via de novo pathway; UDP from UMP (UMPK route): step 1/1. Inhibited by UTP. Catalyzes the reversible phosphorylation of UMP to UDP. The sequence is that of Uridylate kinase from Mycobacterium tuberculosis (strain ATCC 25177 / H37Ra).